The chain runs to 67 residues: Conotoxin Cl6.10 (67 aa).

The N-terminal stretch at 1–24 is a signal peptide; sequence MKLTCVLIAAVLLLAVCQLDSADA. A propeptide spanning residues 25–37 is cleaved from the precursor; it reads TAYMRKDPSLRSP. Intrachain disulfides connect Cys-43/Cys-57, Cys-50/Cys-61, and Cys-56/Cys-65.

The protein belongs to the conotoxin O1 superfamily. Expressed by the venom duct.

The protein resides in the secreted. The protein is Conotoxin Cl6.10 of Californiconus californicus (California cone).